The sequence spans 114 residues: uncharacterized protein (114 aa).

The interval 1–114 (MSTAASSRMR…HASQSPDTAY (114 aa)) is disordered. A compositionally biased stretch (low complexity) spans 32–43 (CRRVPSRPCRPV).

This is an uncharacterized protein from Human adenovirus B serotype 7 (HAdV-7).